A 344-amino-acid chain; its full sequence is N-acetyl-gamma-glutamyl-phosphate reductase (344 aa).

Residue Cys150 is part of the active site.

This sequence belongs to the NAGSA dehydrogenase family. Type 1 subfamily.

The protein resides in the cytoplasm. It catalyses the reaction N-acetyl-L-glutamate 5-semialdehyde + phosphate + NADP(+) = N-acetyl-L-glutamyl 5-phosphate + NADPH + H(+). It functions in the pathway amino-acid biosynthesis; L-arginine biosynthesis; N(2)-acetyl-L-ornithine from L-glutamate: step 3/4. Catalyzes the NADPH-dependent reduction of N-acetyl-5-glutamyl phosphate to yield N-acetyl-L-glutamate 5-semialdehyde. This is N-acetyl-gamma-glutamyl-phosphate reductase from Pseudomonas syringae pv. syringae (strain B728a).